We begin with the raw amino-acid sequence, 66 residues long: MLLCKIKGYTERQKLNQKLMRAAATGDIEAVQKLVLRGADIYCRDHQGDTALSLAAGSGYLDILDI.

The ANK repeat unit spans residues 14–66 (KLNQKLMRAAATGDIEAVQKLVLRGADIYCRDHQGDTALSLAAGSGYLDILDI).

The polypeptide is Putative ankyrin repeat protein RF_pd14 (Rickettsia felis (strain ATCC VR-1525 / URRWXCal2) (Rickettsia azadi)).